Reading from the N-terminus, the 780-residue chain is Cullin-5 (780 aa).

Ser34 bears the Phosphoserine mark. Thr210 bears the Phosphothreonine mark. Residues 711 to 772 form the Cullin neddylation domain; that stretch reads RILRTQEAII…HKYIRRDEAD (62 aa). Lys724 participates in a covalent cross-link: Glycyl lysine isopeptide (Lys-Gly) (interchain with G-Cter in NEDD8).

The protein belongs to the cullin family. Component of multiple cullin-5-RING E3 ubiquitin-protein ligase complexes (ECS complexes, also named CRL5 complexes) formed of CUL5, Elongin BC (ELOB and ELOC), RNF7/RBX2 and a variable SOCS box domain-containing protein as substrate-specific recognition component. CUL5-containing ECS complexes specifically contain RNF7/RBX2, and not RBX1, as catalytic subunit. Component of the ECS(ASB2) complex with the substrate recognition component ASB2. Component of the ECS(ASB6) complex with the substrate recognition component ASB6. Component of the ECS(ASB7) complex with the substrate recognition component ASB7. Component of the ECS(ASB9) complex with the substrate recognition component ASB9. Component of the ECS(ASB11) complex with the substrate recognition component ASB11. Component of the ECS(ASB12) complex with the substrate recognition component ASB12. Component of the ECS(LRRC41) complex with the substrate recognition component LRRC41. Component of the ECS(SOCS1) complex with the substrate recognition component SOCS1. Component of the ECS(SOCS2) complex with the substrate recognition component SOCS2. Component of the ECS(WSB1) complex with the substrate recognition subunit WSB1. Component of the ECS(SOCS3) complex with the substrate recognition component SOCS3. Component of the ECS(SOCS7) complex with the substrate recognition component SOCS7. Component of the ECS(SPSB1) complex with the substrate recognition component SPSB1. Component of the ECS(SPSB3) complex with the substrate recognition component SPSB3. Component of the ECS(SPSB2) complex with the substrate recognition component SPSB2. Component of the ECS(SPSB4) complex with the substrate recognition component SPSB4. Component of the ECS(RAB40) complex with the substrate recognition subunit RAB40A, RAB40B or RAB40C. Component of the ECS(KLHDC1) complex with the substrate recognition component KLHDC1. Component of the ECS(PCMTD1) complex with the substrate recognition subunit PCMTD1. May also form complexes containing RBX1 and ELOA or VHL; additional evidence is however required to confirm this result in vivo. Interacts (when neddylated) with ARIH2; leading to activate the E3 ligase activity of ARIH2. Interacts with ERCC6; the interaction is induced by DNA damaging agents or inhibitors of RNA polymerase II elongation. Interacts with ELOA (via the BC-box). Interacts (unneddylated form) with DCUN1D1, DCUN1D2, DCUN1D3, DCUN1D4 and DCUN1D5; these interactions promote the cullin neddylation. Post-translationally, neddylated; which enhances the ubiquitination activity of ECS complexes and prevents binding of the inhibitor CAND1. Deneddylated via its interaction with the COP9 signalosome (CSN).

The protein resides in the nucleus. The protein operates within protein modification; protein ubiquitination. Core component of multiple cullin-5-RING E3 ubiquitin-protein ligase complexes (ECS complexes, also named CRL5 complexes), which mediate the ubiquitination and subsequent proteasomal degradation of target proteins. Acts a scaffold protein that contributes to catalysis through positioning of the substrate and the ubiquitin-conjugating enzyme. The functional specificity of the E3 ubiquitin-protein ligase complex depends on the variable SOCS box-containing substrate recognition component. Acts as a key regulator of neuron positioning during cortex development: component of various SOCS-containing ECS complexes, such as the ECS(SOCS7) complex, that regulate reelin signaling by mediating ubiquitination and degradation of DAB1. ECS(SOCS1) seems to direct ubiquitination of JAK2. The ECS(SOCS2) complex mediates the ubiquitination and subsequent proteasomal degradation of phosphorylated EPOR and GHR. The ECS(SPSB3) complex catalyzes ubiquitination of nuclear CGAS. ECS(KLHDC1) complex is part of the DesCEND (destruction via C-end degrons) pathway and mediates ubiquitination and degradation of truncated SELENOS selenoprotein produced by failed UGA/Sec decoding, which ends with a glycine. The ECS(ASB9) complex mediates ubiquitination and degradation of CKB. As part of some ECS complex, promotes 'Lys-11'-linked ubiquitination and degradation of BTRC. As part of a multisubunit ECS complex, polyubiquitinates monoubiquitinated POLR2A. As part of the ECS(RAB40C) complex, mediates ANKRD28 ubiquitination and degradation, thereby regulating protein phosphatase 6 (PP6) complex activity and focal adhesion assembly during cell migration. As part of the ECS(RAB40A) complex, mediates RHOU 'Lys-48'-linked ubiquitination and degradation, thus inhibiting focal adhesion disassembly during cell migration. As part of the ECS(RAB40B) complex, mediates LIMA1/EPLIN and RAP2 ubiquitination, thereby regulating actin cytoskeleton dynamics and stress fiber formation during cell migration. May form a cell surface vasopressin receptor. The protein is Cullin-5 of Rattus norvegicus (Rat).